The primary structure comprises 456 residues: Exodeoxyribonuclease 7 large subunit (456 aa).

It belongs to the XseA family. In terms of assembly, heterooligomer composed of large and small subunits.

It is found in the cytoplasm. The enzyme catalyses Exonucleolytic cleavage in either 5'- to 3'- or 3'- to 5'-direction to yield nucleoside 5'-phosphates.. In terms of biological role, bidirectionally degrades single-stranded DNA into large acid-insoluble oligonucleotides, which are then degraded further into small acid-soluble oligonucleotides. The sequence is that of Exodeoxyribonuclease 7 large subunit from Lactobacillus delbrueckii subsp. bulgaricus (strain ATCC 11842 / DSM 20081 / BCRC 10696 / JCM 1002 / NBRC 13953 / NCIMB 11778 / NCTC 12712 / WDCM 00102 / Lb 14).